The chain runs to 426 residues: Histidinol dehydrogenase (426 aa).

3 residues coordinate NAD(+): Tyr130, Gln187, and Asn210. Substrate is bound by residues Ser233, Gln255, and His258. Zn(2+) contacts are provided by Gln255 and His258. Catalysis depends on proton acceptor residues Glu323 and His324. Substrate is bound by residues His324, Asp357, Glu411, and His416. Residue Asp357 coordinates Zn(2+). Zn(2+) is bound at residue His416.

It belongs to the histidinol dehydrogenase family. Zn(2+) serves as cofactor.

It carries out the reaction L-histidinol + 2 NAD(+) + H2O = L-histidine + 2 NADH + 3 H(+). It participates in amino-acid biosynthesis; L-histidine biosynthesis; L-histidine from 5-phospho-alpha-D-ribose 1-diphosphate: step 9/9. Catalyzes the sequential NAD-dependent oxidations of L-histidinol to L-histidinaldehyde and then to L-histidine. This chain is Histidinol dehydrogenase (hisD), found in Aquifex aeolicus (strain VF5).